A 194-amino-acid chain; its full sequence is Peptidyl-tRNA hydrolase (194 aa).

Tyrosine 17 contributes to the tRNA binding site. The active-site Proton acceptor is histidine 22. TRNA contacts are provided by tyrosine 68, asparagine 70, and asparagine 116.

Belongs to the PTH family. As to quaternary structure, monomer.

It localises to the cytoplasm. The catalysed reaction is an N-acyl-L-alpha-aminoacyl-tRNA + H2O = an N-acyl-L-amino acid + a tRNA + H(+). Functionally, hydrolyzes ribosome-free peptidyl-tRNAs (with 1 or more amino acids incorporated), which drop off the ribosome during protein synthesis, or as a result of ribosome stalling. Its function is as follows. Catalyzes the release of premature peptidyl moieties from peptidyl-tRNA molecules trapped in stalled 50S ribosomal subunits, and thus maintains levels of free tRNAs and 50S ribosomes. The chain is Peptidyl-tRNA hydrolase from Pseudomonas syringae pv. tomato (strain ATCC BAA-871 / DC3000).